The chain runs to 276 residues: Large ribosomal subunit protein uL2 (276 aa).

Residues 224-265 (GTAMNPIDHPHGGGEGKNFGKHPVSPWGVQTKGKRTRSNKRT) form a disordered region.

Belongs to the universal ribosomal protein uL2 family. As to quaternary structure, part of the 50S ribosomal subunit. Forms a bridge to the 30S subunit in the 70S ribosome.

One of the primary rRNA binding proteins. Required for association of the 30S and 50S subunits to form the 70S ribosome, for tRNA binding and peptide bond formation. It has been suggested to have peptidyltransferase activity; this is somewhat controversial. Makes several contacts with the 16S rRNA in the 70S ribosome. The sequence is that of Large ribosomal subunit protein uL2 from Blochmanniella floridana.